The primary structure comprises 508 residues: Photosystem II CP47 reaction center protein (508 aa).

Transmembrane regions (helical) follow at residues 21 to 36, 101 to 115, 140 to 156, 203 to 218, 237 to 252, and 457 to 472; these read SVHI…WAGS, IVFS…IWHW, GIHL…FGAF, IAAG…FHLS, VLSS…AFVV, and SFAL…HGSR.

This sequence belongs to the PsbB/PsbC family. PsbB subfamily. As to quaternary structure, PSII is composed of 1 copy each of membrane proteins PsbA, PsbB, PsbC, PsbD, PsbE, PsbF, PsbH, PsbI, PsbJ, PsbK, PsbL, PsbM, PsbT, PsbX, PsbY, PsbZ, Psb30/Ycf12, at least 3 peripheral proteins of the oxygen-evolving complex and a large number of cofactors. It forms dimeric complexes. Binds multiple chlorophylls. PSII binds additional chlorophylls, carotenoids and specific lipids. is required as a cofactor.

It localises to the plastid. The protein resides in the chloroplast thylakoid membrane. Its function is as follows. One of the components of the core complex of photosystem II (PSII). It binds chlorophyll and helps catalyze the primary light-induced photochemical processes of PSII. PSII is a light-driven water:plastoquinone oxidoreductase, using light energy to abstract electrons from H(2)O, generating O(2) and a proton gradient subsequently used for ATP formation. The protein is Photosystem II CP47 reaction center protein of Draba nemorosa (Woodland whitlowgrass).